A 96-amino-acid polypeptide reads, in one-letter code: Co-chaperonin GroES (96 aa).

Belongs to the GroES chaperonin family. In terms of assembly, heptamer of 7 subunits arranged in a ring. Interacts with the chaperonin GroEL.

The protein resides in the cytoplasm. In terms of biological role, together with the chaperonin GroEL, plays an essential role in assisting protein folding. The GroEL-GroES system forms a nano-cage that allows encapsulation of the non-native substrate proteins and provides a physical environment optimized to promote and accelerate protein folding. GroES binds to the apical surface of the GroEL ring, thereby capping the opening of the GroEL channel. In Acinetobacter baumannii (strain AB307-0294), this protein is Co-chaperonin GroES.